Reading from the N-terminus, the 243-residue chain is Protein canopy homolog 3 (243 aa).

The N-terminal stretch at 1-15 (MWFLFLLLPLWAGCA) is a signal peptide. Positions 27–236 (SKCEVCKYVA…KEEKKQMDQP (210 aa)) constitute a Saposin B-type domain. Intrachain disulfides connect Cys29–Cys188, Cys32–Cys176, and Cys86–Cys148. The stretch at 136–160 (ETSAEVADMKKQCDVMMENYEEVIE) forms a coiled coil. Residues 186-243 (QSCLSEQGDSRKGDTGPSTGTKKQKKQGEKKNKSKKQNSGSKEEKKQMDQPMAAKEEL) form a disordered region. Basic and acidic residues predominate over residues 226 to 243 (SKEEKKQMDQPMAAKEEL).

Belongs to the canopy family.

It is found in the endoplasmic reticulum. In terms of biological role, toll-like receptor (TLR)-specific co-chaperone for HSP90B1. Required for proper TLR folding and hence controls TLR exit from the endoplasmic reticulum. Consequently, required for immune responses. This is Protein canopy homolog 3 (cnpy3) from Xenopus laevis (African clawed frog).